We begin with the raw amino-acid sequence, 325 residues long: ATP phosphoribosyltransferase (325 aa).

It belongs to the ATP phosphoribosyltransferase family. Long subfamily. The cofactor is Mg(2+).

It is found in the cytoplasm. It carries out the reaction 1-(5-phospho-beta-D-ribosyl)-ATP + diphosphate = 5-phospho-alpha-D-ribose 1-diphosphate + ATP. It functions in the pathway amino-acid biosynthesis; L-histidine biosynthesis; L-histidine from 5-phospho-alpha-D-ribose 1-diphosphate: step 1/9. With respect to regulation, feedback inhibited by histidine. Functionally, catalyzes the condensation of ATP and 5-phosphoribose 1-diphosphate to form N'-(5'-phosphoribosyl)-ATP (PR-ATP). Has a crucial role in the pathway because the rate of histidine biosynthesis seems to be controlled primarily by regulation of HisG enzymatic activity. The polypeptide is ATP phosphoribosyltransferase (Bradyrhizobium sp. (strain ORS 278)).